The sequence spans 110 residues: Large ribosomal subunit protein uL22 (110 aa).

The protein belongs to the universal ribosomal protein uL22 family. As to quaternary structure, part of the 50S ribosomal subunit.

Functionally, this protein binds specifically to 23S rRNA; its binding is stimulated by other ribosomal proteins, e.g. L4, L17, and L20. It is important during the early stages of 50S assembly. It makes multiple contacts with different domains of the 23S rRNA in the assembled 50S subunit and ribosome. In terms of biological role, the globular domain of the protein is located near the polypeptide exit tunnel on the outside of the subunit, while an extended beta-hairpin is found that lines the wall of the exit tunnel in the center of the 70S ribosome. The polypeptide is Large ribosomal subunit protein uL22 (Shewanella denitrificans (strain OS217 / ATCC BAA-1090 / DSM 15013)).